The primary structure comprises 468 residues: 6-phosphogluconate dehydrogenase, decarboxylating (468 aa).

Residues G10–G15, N33–S35, V74–A76, and N102 contribute to the NADP(+) site. Substrate-binding positions include N102 and S128–G130. The active-site Proton acceptor is K183. Position 186–187 (H186–N187) interacts with substrate. E190 acts as the Proton donor in catalysis. Substrate-binding residues include Y191, K260, R287, R445, and H451.

The protein belongs to the 6-phosphogluconate dehydrogenase family. In terms of assembly, homodimer.

The enzyme catalyses 6-phospho-D-gluconate + NADP(+) = D-ribulose 5-phosphate + CO2 + NADPH. It participates in carbohydrate degradation; pentose phosphate pathway; D-ribulose 5-phosphate from D-glucose 6-phosphate (oxidative stage): step 3/3. Functionally, catalyzes the oxidative decarboxylation of 6-phosphogluconate to ribulose 5-phosphate and CO(2), with concomitant reduction of NADP to NADPH. The polypeptide is 6-phosphogluconate dehydrogenase, decarboxylating (gnd) (Escherichia coli (strain K12)).